The chain runs to 305 residues: Peroxisome assembly protein 26 (305 aa).

Residues 1–246 lie on the Cytoplasmic side of the membrane; sequence MKSDASTSAA…RRLWGSVVSH (246 aa). The chain crosses the membrane as a helical; Signal-anchor for type II membrane protein span at residues 247 to 267; that stretch reads LLSQPFRKGLLAALILCLLIL. Residues 268–305 lie on the Peroxisomal matrix side of the membrane; that stretch reads RFDPAAPSSLPFLYQLTQLFRRIQKATLSRLYPLALRD.

Belongs to the peroxin-26 family. As to quaternary structure, interacts (via its cytoplasmic domain) with PEX6; interaction is direct and is ATP-dependent. Interacts with PEX1; interaction is indirect and is mediated via interaction with PEX6.

The protein localises to the peroxisome membrane. In terms of biological role, peroxisomal docking factor that anchors PEX1 and PEX6 to peroxisome membranes. PEX26 is therefore required for the formation of the PEX1-PEX6 AAA ATPase complex, a complex that mediates the extraction of the PEX5 receptor from peroxisomal membrane. The protein is Peroxisome assembly protein 26 of Mus musculus (Mouse).